Consider the following 154-residue polypeptide: Transcription antitermination protein NusB (154 aa).

This sequence belongs to the NusB family.

Its function is as follows. Involved in transcription antitermination. Required for transcription of ribosomal RNA (rRNA) genes. Binds specifically to the boxA antiterminator sequence of the ribosomal RNA (rrn) operons. This is Transcription antitermination protein NusB from Methylobacillus flagellatus (strain ATCC 51484 / DSM 6875 / VKM B-1610 / KT).